The sequence spans 419 residues: UDP-N-acetylglucosamine 1-carboxyvinyltransferase (419 aa).

22–23 (KN) is a phosphoenolpyruvate binding site. Arginine 91 lines the UDP-N-acetyl-alpha-D-glucosamine pocket. The Proton donor role is filled by cysteine 115. Cysteine 115 is modified (2-(S-cysteinyl)pyruvic acid O-phosphothioketal). Residues 120–124 (RPVDL), 160–163 (KVSV), aspartate 305, and valine 327 each bind UDP-N-acetyl-alpha-D-glucosamine.

The protein belongs to the EPSP synthase family. MurA subfamily.

The protein localises to the cytoplasm. The enzyme catalyses phosphoenolpyruvate + UDP-N-acetyl-alpha-D-glucosamine = UDP-N-acetyl-3-O-(1-carboxyvinyl)-alpha-D-glucosamine + phosphate. Its pathway is cell wall biogenesis; peptidoglycan biosynthesis. In terms of biological role, cell wall formation. Adds enolpyruvyl to UDP-N-acetylglucosamine. The sequence is that of UDP-N-acetylglucosamine 1-carboxyvinyltransferase from Salmonella gallinarum (strain 287/91 / NCTC 13346).